Here is a 280-residue protein sequence, read N- to C-terminus: MKRVGAHVSTAGGVENAPLQATSIGAKAFALFTKNQRQWKAPKLTTSSIEAFKKNCEAGGFRPEHILPHDSYLINLGSPDPEKLQRAREAFIEEMQRAEELGLLLLNFHPGSHLKEIAEERCLELIAESINRALDATKTVTAVIENTAGQGTNLGNRFEQLAFLVDRIEDKTRVGVCLDTCHLFASGYDLQTTAAIESTFMEFDRIVGLRYLRGMHLNDAMQPLGSRIDRHAGIGKGTIGMDAFRWIMNNPACEEIPLILETPDSAAWSEEISLLYALEQ.

Positions 69, 109, 145, 179, 182, 216, 229, 231, and 261 each coordinate Zn(2+).

Belongs to the AP endonuclease 2 family. It depends on Zn(2+) as a cofactor.

It catalyses the reaction Endonucleolytic cleavage to 5'-phosphooligonucleotide end-products.. In terms of biological role, endonuclease IV plays a role in DNA repair. It cleaves phosphodiester bonds at apurinic or apyrimidinic (AP) sites, generating a 3'-hydroxyl group and a 5'-terminal sugar phosphate. This chain is Probable endonuclease 4, found in Pelodictyon phaeoclathratiforme (strain DSM 5477 / BU-1).